An 831-amino-acid chain; its full sequence is DNA polymerase I, thermostable (831 aa).

The 5'-3' exonuclease domain occupies 174 to 258 (RPEQWVDYRA…TDLPLEVDFG (85 aa)). Positions 409 to 831 (ERLFQTLKER…LGEDWLSAKE (423 aa)) are polymerase.

This sequence belongs to the DNA polymerase type-A family.

The catalysed reaction is DNA(n) + a 2'-deoxyribonucleoside 5'-triphosphate = DNA(n+1) + diphosphate. Functionally, in addition to polymerase activity, this DNA polymerase exhibits 5'-3' exonuclease activity. The polypeptide is DNA polymerase I, thermostable (polA) (Thermus thermophilus).